Reading from the N-terminus, the 315-residue chain is Mycothiol acetyltransferase (315 aa).

2 consecutive N-acetyltransferase domains span residues 4–141 (LDWR…RPLR) and 152–315 (VVIR…GTDN). Glutamate 36 lines the 1D-myo-inositol 2-(L-cysteinylamino)-2-deoxy-alpha-D-glucopyranoside pocket. Residues 80–82 (LVV) and 88–93 (RRGIGT) contribute to the acetyl-CoA site. 3 residues coordinate 1D-myo-inositol 2-(L-cysteinylamino)-2-deoxy-alpha-D-glucopyranoside: glutamate 179, lysine 224, and glutamate 234. Acetyl-CoA is bound by residues 238-240 (LGV) and 245-251 (QRRGLGQ). Tyrosine 282 lines the 1D-myo-inositol 2-(L-cysteinylamino)-2-deoxy-alpha-D-glucopyranoside pocket. 287 to 292 (NVAAVR) provides a ligand contact to acetyl-CoA.

It belongs to the acetyltransferase family. MshD subfamily. As to quaternary structure, monomer.

It carries out the reaction 1D-myo-inositol 2-(L-cysteinylamino)-2-deoxy-alpha-D-glucopyranoside + acetyl-CoA = mycothiol + CoA + H(+). Its function is as follows. Catalyzes the transfer of acetyl from acetyl-CoA to desacetylmycothiol (Cys-GlcN-Ins) to form mycothiol. The polypeptide is Mycothiol acetyltransferase (Mycobacterium bovis (strain ATCC BAA-935 / AF2122/97)).